A 169-amino-acid chain; its full sequence is Protein GrpE (169 aa).

Positions 1 to 25 are disordered; the sequence is MSEEKQNGQIQEETVENSENQNNEL. The span at 7 to 23 shows a compositional bias: polar residues; sequence NGQIQEETVENSENQNN.

This sequence belongs to the GrpE family. As to quaternary structure, homodimer.

Its subcellular location is the cytoplasm. In terms of biological role, participates actively in the response to hyperosmotic and heat shock by preventing the aggregation of stress-denatured proteins, in association with DnaK and GrpE. It is the nucleotide exchange factor for DnaK and may function as a thermosensor. Unfolded proteins bind initially to DnaJ; upon interaction with the DnaJ-bound protein, DnaK hydrolyzes its bound ATP, resulting in the formation of a stable complex. GrpE releases ADP from DnaK; ATP binding to DnaK triggers the release of the substrate protein, thus completing the reaction cycle. Several rounds of ATP-dependent interactions between DnaJ, DnaK and GrpE are required for fully efficient folding. This Campylobacter lari (strain RM2100 / D67 / ATCC BAA-1060) protein is Protein GrpE.